The following is a 423-amino-acid chain: GTPase HflX (423 aa).

Residues 202 to 366 (PAAAIVGYTN…LLETILRNQK (165 aa)) form the Hflx-type G domain. Residues 208 to 215 (GYTNAGKS), 233 to 237 (FATLD), 255 to 258 (DTVG), 321 to 324 (NKID), and 344 to 346 (SAK) contribute to the GTP site. Residues Ser215 and Thr235 each coordinate Mg(2+).

The protein belongs to the TRAFAC class OBG-HflX-like GTPase superfamily. HflX GTPase family. In terms of assembly, monomer. Associates with the 50S ribosomal subunit. The cofactor is Mg(2+).

The protein localises to the cytoplasm. In terms of biological role, GTPase that associates with the 50S ribosomal subunit and may have a role during protein synthesis or ribosome biogenesis. The sequence is that of GTPase HflX from Lacrimispora saccharolytica (strain ATCC 35040 / DSM 2544 / NRCC 2533 / WM1) (Clostridium saccharolyticum).